The primary structure comprises 310 residues: ADP-L-glycero-D-manno-heptose-6-epimerase (310 aa).

NADP(+) is bound by residues 10–11 (FI), 31–32 (DN), lysine 38, lysine 53, 75–79 (EGACS), and asparagine 92. Residue tyrosine 140 is the Proton acceptor of the active site. Lysine 144 lines the NADP(+) pocket. A substrate-binding site is contributed by asparagine 169. NADP(+) contacts are provided by valine 170 and lysine 178. Lysine 178 serves as the catalytic Proton acceptor. Substrate is bound by residues serine 180, histidine 187, 201–204 (FEGS), arginine 209, and tyrosine 272.

This sequence belongs to the NAD(P)-dependent epimerase/dehydratase family. HldD subfamily. In terms of assembly, homopentamer. It depends on NADP(+) as a cofactor.

It carries out the reaction ADP-D-glycero-beta-D-manno-heptose = ADP-L-glycero-beta-D-manno-heptose. It participates in nucleotide-sugar biosynthesis; ADP-L-glycero-beta-D-manno-heptose biosynthesis; ADP-L-glycero-beta-D-manno-heptose from D-glycero-beta-D-manno-heptose 7-phosphate: step 4/4. Its function is as follows. Catalyzes the interconversion between ADP-D-glycero-beta-D-manno-heptose and ADP-L-glycero-beta-D-manno-heptose via an epimerization at carbon 6 of the heptose. In Cronobacter sakazakii (strain ATCC BAA-894) (Enterobacter sakazakii), this protein is ADP-L-glycero-D-manno-heptose-6-epimerase.